The following is a 207-amino-acid chain: Protein GrpE (207 aa).

The protein belongs to the GrpE family. Homodimer.

It is found in the cytoplasm. Functionally, participates actively in the response to hyperosmotic and heat shock by preventing the aggregation of stress-denatured proteins, in association with DnaK and GrpE. It is the nucleotide exchange factor for DnaK and may function as a thermosensor. Unfolded proteins bind initially to DnaJ; upon interaction with the DnaJ-bound protein, DnaK hydrolyzes its bound ATP, resulting in the formation of a stable complex. GrpE releases ADP from DnaK; ATP binding to DnaK triggers the release of the substrate protein, thus completing the reaction cycle. Several rounds of ATP-dependent interactions between DnaJ, DnaK and GrpE are required for fully efficient folding. The polypeptide is Protein GrpE (Pelodictyon phaeoclathratiforme (strain DSM 5477 / BU-1)).